The following is a 272-amino-acid chain: Cell division protein ZipA (272 aa).

The Periplasmic portion of the chain corresponds to 1-4 (METH). A helical membrane pass occupies residues 5–25 (ILFFILAGLLIAVLIGYSIWS). Over 26-272 (ARREKSRIFS…RQNYLLRVAN (247 aa)) the chain is Cytoplasmic.

It belongs to the ZipA family. Interacts with FtsZ via their C-terminal domains.

The protein resides in the cell inner membrane. Its function is as follows. Essential cell division protein that stabilizes the FtsZ protofilaments by cross-linking them and that serves as a cytoplasmic membrane anchor for the Z ring. Also required for the recruitment to the septal ring of downstream cell division proteins. The sequence is that of Cell division protein ZipA from Glaesserella parasuis serovar 5 (strain SH0165) (Haemophilus parasuis).